We begin with the raw amino-acid sequence, 391 residues long: 8-amino-7-oxononanoate synthase 1 (391 aa).

Residue 108–109 coordinates pyridoxal 5'-phosphate; the sequence is GF. Histidine 133 is a binding site for substrate. Pyridoxal 5'-phosphate-binding positions include serine 180, 205-208, and 236-239; these read DDAH and TLSK. Residue lysine 239 is modified to N6-(pyridoxal phosphate)lysine. Threonine 353 contacts substrate.

Belongs to the class-II pyridoxal-phosphate-dependent aminotransferase family. BioF subfamily. Homodimer. It depends on pyridoxal 5'-phosphate as a cofactor.

It catalyses the reaction 6-carboxyhexanoyl-[ACP] + L-alanine + H(+) = (8S)-8-amino-7-oxononanoate + holo-[ACP] + CO2. It functions in the pathway cofactor biosynthesis; biotin biosynthesis. Functionally, catalyzes the decarboxylative condensation of pimeloyl-[acyl-carrier protein] and L-alanine to produce 8-amino-7-oxononanoate (AON), [acyl-carrier protein], and carbon dioxide. This is 8-amino-7-oxononanoate synthase 1 from Bacillus velezensis (strain DSM 23117 / BGSC 10A6 / LMG 26770 / FZB42) (Bacillus amyloliquefaciens subsp. plantarum).